Consider the following 328-residue polypeptide: Serine/threonine-protein phosphatase PP2A-2 catalytic subunit (328 aa).

Positions 76, 78, 104, and 136 each coordinate Mn(2+). Histidine 137 serves as the catalytic Proton donor. Residues histidine 186 and histidine 260 each contribute to the Mn(2+) site. Leucine 328 bears the Leucine methyl ester mark.

The protein belongs to the PPP phosphatase family. PP-2A subfamily. Mn(2+) serves as cofactor.

It catalyses the reaction O-phospho-L-seryl-[protein] + H2O = L-seryl-[protein] + phosphate. It carries out the reaction O-phospho-L-threonyl-[protein] + H2O = L-threonyl-[protein] + phosphate. This chain is Serine/threonine-protein phosphatase PP2A-2 catalytic subunit (PP2A-2), found in Blumeria hordei (Barley powdery mildew).